Reading from the N-terminus, the 70-residue chain is Turripeptide Gsg9.2 (70 aa).

Residues 1-20 form the signal peptide; that stretch reads MKVYCLLLVLLVGLVSQAHG. One can recognise a Kazal-like domain in the interval 21-70; that stretch reads QLDKKCQMVCTMDYRPVCGSDGRTYPNKCTLTSTACMSQRSITVFHDGEC. Intrachain disulfides connect Cys26/Cys56, Cys30/Cys49, and Cys38/Cys70.

It belongs to the conopeptide P-like superfamily. In terms of tissue distribution, expressed by the venom duct.

Its subcellular location is the secreted. In terms of biological role, acts as a neurotoxin by inhibiting an ion channel. May also act as a serine protease inhibitor, since it possess the kazal serine protease inhibitor signature. The sequence is that of Turripeptide Gsg9.2 from Gemmula sogodensis (Gem-turris).